An 842-amino-acid chain; its full sequence is Pentatricopeptide repeat-containing protein At3g22690 (842 aa).

PPR repeat units follow at residues 98–132 (TCFMYNSLIRGYASSGLCNEAILLFLRMMNSGISP), 133–167 (DKYTFPFGLSACAKSRAKGNGIQIHGLIVKMGYAK), 168–202 (DLFVQNSLVHFYAECGELDSARKVFDEMSERNVVS), 203–234 (WTSMICGYARRDFAKDAVDLFFRMVRDEEVTP), 235–269 (NSVTMVCVISACAKLEDLETGEKVYAFIRNSGIEV), 270–300 (NDLMVSALVDMYMKCNAIDVAKRLFDEYGAS), 301–335 (NLDLCNAMASNYVRQGLTREALGVFNLMMDSGVRP), 336–370 (DRISMLSAISSCSQLRNILWGKSCHGYVLRNGFES), 371–401 (WDNICNALIDMYMKCHRQDTAFRIFDRMSNK), 402–436 (TVVTWNSIVAGYVENGEVDAAWETFETMPEKNIVS), 437–463 (WNTIISGLVQGSLFEEAIEVFCSMQSQ), 469–503 (DGVTMMSIASACGHLGALDLAKWIYYYIEKNGIQL), 504–534 (DVRLGTTLVDMFSRCGDPESAMSIFNSLTNR), 535–569 (DVSAWTAAIGAMAMAGNAERAIELFDDMIEQGLKP), 570–605 (DGVAFVGALTACSHGGLVQQGKEIFYSMLKLHGVSP), and 606–636 (EDVHYGCMVDLLGRAGLLEEAVQLIEDMPME). The tract at residues 641–716 (IWNSLLAACR…PPGTSSIQIR (76 aa)) is type E motif. A type E(+) motif region spans residues 717–747 (GKTHEFTSGDESHPEMPNIEAMLDEVSQRAS). The segment at 748–842 (HLGHVPDLSN…QGKCSCGDFW (95 aa)) is type DYW motif.

Belongs to the PPR family. PCMP-H subfamily.

The sequence is that of Pentatricopeptide repeat-containing protein At3g22690 (PCMP-H56) from Arabidopsis thaliana (Mouse-ear cress).